We begin with the raw amino-acid sequence, 235 residues long: MGGSRHFAVDDAAQRRRLEAGLDAIGLALTPAQVDTLFAYLTLLRKWNGVYNLTAIRHPDEMLTHHLLDSLTAVPALAEAARSANVAQGARGRVLDVGSGGGMPGMPLAISCPDVSVLMVDIVQKKTAFLTQCRAQLHLTNAAAHWGPVEKIDDEQGYAVITSRAFAELTDFVTLSGHLLAPGGKLIAMKGVYPQAEIDRMEAAGLMADWQVEAVPKLVVPELDVERHLVVLSRR.

S-adenosyl-L-methionine contacts are provided by residues Gly98, Met103, 149–150 (VE), and Arg164.

The protein belongs to the methyltransferase superfamily. RNA methyltransferase RsmG family.

It localises to the cytoplasm. The catalysed reaction is guanosine(527) in 16S rRNA + S-adenosyl-L-methionine = N(7)-methylguanosine(527) in 16S rRNA + S-adenosyl-L-homocysteine. Specifically methylates the N7 position of guanine in position 527 of 16S rRNA. The chain is Ribosomal RNA small subunit methyltransferase G from Cupriavidus metallidurans (strain ATCC 43123 / DSM 2839 / NBRC 102507 / CH34) (Ralstonia metallidurans).